A 186-amino-acid polypeptide reads, in one-letter code: Lumazine protein (186 aa).

Lumazine-binding repeat units lie at residues 1-96 (MFRG…VGRG) and 97-186 (GLTG…LNEW).

Requires 6,7-dimethyl-8-(1-D-ribityl)lumazine as cofactor.

Antenna protein that modulates the color of the bioluminescence emission of the luciferase. In the presence of LumP, luciferase emission is shifted to higher energy values (shorter wavelength). This chain is Lumazine protein (lumP), found in Photobacterium leiognathi.